Here is a 517-residue protein sequence, read N- to C-terminus: Putative thymidine phosphorylase (517 aa).

Belongs to the thymidine/pyrimidine-nucleoside phosphorylase family. Type 2 subfamily.

The catalysed reaction is thymidine + phosphate = 2-deoxy-alpha-D-ribose 1-phosphate + thymine. In Legionella pneumophila subsp. pneumophila (strain Philadelphia 1 / ATCC 33152 / DSM 7513), this protein is Putative thymidine phosphorylase.